A 392-amino-acid polypeptide reads, in one-letter code: Alanine--glyoxylate aminotransferase (392 aa).

Residue Thr9 is modified to Phosphothreonine. Residue Lys209 is modified to N6-(pyridoxal phosphate)lysine. Lys225 is modified (N6-acetyllysine; alternate). Lys225 bears the N6-succinyllysine; alternate mark. Lys234 and Lys312 each carry N6-acetyllysine. Arg360 provides a ligand contact to substrate.

The protein belongs to the class-V pyridoxal-phosphate-dependent aminotransferase family. As to quaternary structure, homodimer. Requires pyridoxal 5'-phosphate as cofactor. Liver.

Its subcellular location is the peroxisome. It carries out the reaction L-serine + pyruvate = 3-hydroxypyruvate + L-alanine. It catalyses the reaction glyoxylate + L-alanine = glycine + pyruvate. Alanine--glyoxylate aminotransferase activity is inhibited by 1 mM (aminooxy)acetic acid by 97.5%. Functionally, peroxisomal aminotransferase that catalyzes the transamination of glyoxylate to glycine and contributes to the glyoxylate detoxification. Also catalyzes the transamination between L-serine and pyruvate and contributes to gluconeogenesis from the L-serine metabolism. This Homo sapiens (Human) protein is Alanine--glyoxylate aminotransferase.